A 261-amino-acid chain; its full sequence is 14-3-3 protein 8 (261 aa).

The segment at 237 to 261 (DIPEDGEEAPKGDAANKVGAGEDAE) is disordered.

The protein belongs to the 14-3-3 family. Homodimer.

This Solanum lycopersicum (Tomato) protein is 14-3-3 protein 8 (TFT8).